The sequence spans 435 residues: Minor fimbrial subunit HifE (435 aa).

An N-terminal signal peptide occupies residues 1 to 31; the sequence is MKTLTTYAKYFTPISKIAFLFCFLMGNIAEA.

The protein belongs to the fimbrial protein family.

The protein localises to the fimbrium. Its function is as follows. May be a minor structural protein required for pilus biogenesis. May be the adhesive component in the pili. The sequence is that of Minor fimbrial subunit HifE (hifE) from Haemophilus influenzae.